The chain runs to 461 residues: Photosystem II CP43 reaction center protein (461 aa).

The propeptide occupies 1-2 (ME). Residue threonine 3 is modified to N-acetylthreonine. A Phosphothreonine modification is found at threonine 3. The next 5 helical transmembrane spans lie at 57–81 (LFEV…PHLA), 122–143 (LLGP…KDRN), 166–188 (KALY…RKIT), 243–263 (KPFA…LSYS), and 279–300 (WFNN…ASQA). Glutamate 355 serves as a coordination point for [CaMn4O5] cluster. Residues 435 to 459 (RARAAAAGFEKGIDRDFEPVLSMTP) form a helical membrane-spanning segment.

Belongs to the PsbB/PsbC family. PsbC subfamily. PSII is composed of 1 copy each of membrane proteins PsbA, PsbB, PsbC, PsbD, PsbE, PsbF, PsbH, PsbI, PsbJ, PsbK, PsbL, PsbM, PsbT, PsbX, PsbY, PsbZ, Psb30/Ycf12, at least 3 peripheral proteins of the oxygen-evolving complex and a large number of cofactors. It forms dimeric complexes. It depends on Binds multiple chlorophylls and provides some of the ligands for the Ca-4Mn-5O cluster of the oxygen-evolving complex. It may also provide a ligand for a Cl- that is required for oxygen evolution. PSII binds additional chlorophylls, carotenoids and specific lipids. as a cofactor.

The protein localises to the plastid. The protein resides in the chloroplast thylakoid membrane. One of the components of the core complex of photosystem II (PSII). It binds chlorophyll and helps catalyze the primary light-induced photochemical processes of PSII. PSII is a light-driven water:plastoquinone oxidoreductase, using light energy to abstract electrons from H(2)O, generating O(2) and a proton gradient subsequently used for ATP formation. The protein is Photosystem II CP43 reaction center protein of Gossypium barbadense (Sea Island cotton).